We begin with the raw amino-acid sequence, 288 residues long: Bis(5'-nucleosyl)-tetraphosphatase, symmetrical (288 aa).

Belongs to the Ap4A hydrolase family.

The catalysed reaction is P(1),P(4)-bis(5'-adenosyl) tetraphosphate + H2O = 2 ADP + 2 H(+). Its function is as follows. Hydrolyzes diadenosine 5',5'''-P1,P4-tetraphosphate to yield ADP. This Baumannia cicadellinicola subsp. Homalodisca coagulata protein is Bis(5'-nucleosyl)-tetraphosphatase, symmetrical.